The chain runs to 139 residues: Large-conductance mechanosensitive channel (139 aa).

The next 3 membrane-spanning stretches (helical) occupy residues 10 to 30 (FAVKGNVVDLAVAVIVGAAFG), 40 to 60 (VIMPVVGKIFGGLDFSNYYIA), and 80 to 100 (LAYGNFITIALNFIILAFIIF).

Belongs to the MscL family. In terms of assembly, homopentamer.

The protein resides in the cell inner membrane. Its function is as follows. Channel that opens in response to stretch forces in the membrane lipid bilayer. May participate in the regulation of osmotic pressure changes within the cell. The sequence is that of Large-conductance mechanosensitive channel from Janthinobacterium sp. (strain Marseille) (Minibacterium massiliensis).